The primary structure comprises 144 residues: MKIVTLFSDGSCLGNPGAGGWAYILRYNEAQKKASGGEAYTTNNQMELKAAIMGLKALKEPCEVRLFTDSSYVANSINEWLANWQKRNFKNVKNVELWQEYLEISKPHKVVASWVKGHAGHPENEECDQMARNEALKIKDENKI.

One can recognise an RNase H type-1 domain in the interval 1–136; sequence MKIVTLFSDG…CDQMARNEAL (136 aa). Residues D9, E47, D69, and D128 each coordinate Mg(2+).

Belongs to the RNase H family. As to quaternary structure, monomer. Requires Mg(2+) as cofactor.

It localises to the cytoplasm. It carries out the reaction Endonucleolytic cleavage to 5'-phosphomonoester.. Its function is as follows. Endonuclease that specifically degrades the RNA of RNA-DNA hybrids. In Campylobacter concisus (strain 13826), this protein is Ribonuclease H.